We begin with the raw amino-acid sequence, 603 residues long: Aspartate--tRNA(Asp/Asn) ligase (603 aa).

The tract at residues 205-208 (QLFK) is aspartate. Arg-227 provides a ligand contact to L-aspartate. ATP is bound by residues 227-229 (RDE) and Gln-236. His-463 serves as a coordination point for L-aspartate. Glu-497 provides a ligand contact to ATP. Arg-504 contacts L-aspartate. 549–552 (GMDR) contacts ATP.

This sequence belongs to the class-II aminoacyl-tRNA synthetase family. Type 1 subfamily. Homodimer.

The protein resides in the cytoplasm. The catalysed reaction is tRNA(Asx) + L-aspartate + ATP = L-aspartyl-tRNA(Asx) + AMP + diphosphate. Its function is as follows. Aspartyl-tRNA synthetase with relaxed tRNA specificity since it is able to aspartylate not only its cognate tRNA(Asp) but also tRNA(Asn). Reaction proceeds in two steps: L-aspartate is first activated by ATP to form Asp-AMP and then transferred to the acceptor end of tRNA(Asp/Asn). In Anaeromyxobacter sp. (strain K), this protein is Aspartate--tRNA(Asp/Asn) ligase.